The following is a 194-amino-acid chain: Large ribosomal subunit protein bL27c (194 aa).

The N-terminal 57 residues, Met-1 to Ser-57, are a transit peptide targeting the chloroplast. The tract at residues Ser-57–Arg-76 is disordered.

Component of the chloroplast large ribosomal subunit (LSU). Mature 70S chloroplast ribosomes of higher plants consist of a small (30S) and a large (50S) subunit. The 30S small subunit contains 1 molecule of ribosomal RNA (16S rRNA) and 24 different proteins. The 50S large subunit contains 3 rRNA molecules (23S, 5S and 4.5S rRNA) and 33 different proteins.

It is found in the plastid. The protein localises to the chloroplast. Functionally, component of the chloroplast ribosome (chloro-ribosome), a dedicated translation machinery responsible for the synthesis of chloroplast genome-encoded proteins, including proteins of the transcription and translation machinery and components of the photosynthetic apparatus. This chain is Large ribosomal subunit protein bL27c (RPL27), found in Spinacia oleracea (Spinach).